Here is a 244-residue protein sequence, read N- to C-terminus: tRNA pseudouridine synthase A (244 aa).

The Nucleophile role is filled by Asp-52. Tyr-111 provides a ligand contact to substrate.

It belongs to the tRNA pseudouridine synthase TruA family. Homodimer.

The catalysed reaction is uridine(38/39/40) in tRNA = pseudouridine(38/39/40) in tRNA. Formation of pseudouridine at positions 38, 39 and 40 in the anticodon stem and loop of transfer RNAs. This is tRNA pseudouridine synthase A from Thermosipho africanus (strain TCF52B).